The following is a 360-amino-acid chain: Squamosa promoter-binding-like protein 7 (360 aa).

A compositionally biased stretch (gly residues) spans 74 to 89; sequence AQGSGGGGGGGGGGSA. Residues 74 to 98 form a disordered region; sequence AQGSGGGGGGGGGGSADQGKRKEKA. Residues 105 to 182 form an SBP-type zinc finger; sequence VPRCQVEGCD…AGHNERRRRS (78 aa). Cysteine 108, cysteine 113, cysteine 130, histidine 133, cysteine 149, cysteine 152, histidine 156, and cysteine 168 together coordinate Zn(2+). Positions 165–181 match the Bipartite nuclear localization signal motif; it reads KKSCRRRLAGHNERRRR. Basic residues predominate over residues 172 to 182; the sequence is LAGHNERRRRS. 3 disordered regions span residues 172 to 196, 261 to 306, and 318 to 360; these read LAGHNERRRRSNASEAMARGSAHPH, FFSD…HENQ, and TTAA…ARVV.

In terms of tissue distribution, expressed in young panicles.

It is found in the nucleus. Trans-acting factor that binds specifically to the consensus nucleotide sequence 5'-TNCGTACAA-3'. May be involved in panicle development. The chain is Squamosa promoter-binding-like protein 7 (SPL7) from Oryza sativa subsp. japonica (Rice).